The following is a 711-amino-acid chain: Ribosomal RNA large subunit methyltransferase K/L (711 aa).

The region spanning 43–154 (LGYRITLWSR…RGQITIGLNF (112 aa)) is the THUMP domain.

The protein belongs to the methyltransferase superfamily. RlmKL family.

Its subcellular location is the cytoplasm. It catalyses the reaction guanosine(2445) in 23S rRNA + S-adenosyl-L-methionine = N(2)-methylguanosine(2445) in 23S rRNA + S-adenosyl-L-homocysteine + H(+). The enzyme catalyses guanosine(2069) in 23S rRNA + S-adenosyl-L-methionine = N(2)-methylguanosine(2069) in 23S rRNA + S-adenosyl-L-homocysteine + H(+). In terms of biological role, specifically methylates the guanine in position 2445 (m2G2445) and the guanine in position 2069 (m7G2069) of 23S rRNA. This chain is Ribosomal RNA large subunit methyltransferase K/L, found in Shewanella woodyi (strain ATCC 51908 / MS32).